The primary structure comprises 334 residues: Holliday junction branch migration complex subunit RuvB (334 aa).

Residues 4–186 (ADRLIAPENP…FGITQRLEYY (183 aa)) form a large ATPase domain (RuvB-L) region. ATP contacts are provided by residues Ile25, Arg26, Gly67, Lys70, Thr71, Thr72, 133–135 (EDY), Arg176, Tyr186, and Arg223. Thr71 lines the Mg(2+) pocket. The segment at 187–257 (KVKDLQDIVQ…TADKALNMLD (71 aa)) is small ATPAse domain (RuvB-S). The interval 260–334 (AEGFDYMDRK…RAYLHFGIEK (75 aa)) is head domain (RuvB-H). DNA is bound by residues Arg315 and Arg320.

It belongs to the RuvB family. In terms of assembly, homohexamer. Forms an RuvA(8)-RuvB(12)-Holliday junction (HJ) complex. HJ DNA is sandwiched between 2 RuvA tetramers; dsDNA enters through RuvA and exits via RuvB. An RuvB hexamer assembles on each DNA strand where it exits the tetramer. Each RuvB hexamer is contacted by two RuvA subunits (via domain III) on 2 adjacent RuvB subunits; this complex drives branch migration. In the full resolvosome a probable DNA-RuvA(4)-RuvB(12)-RuvC(2) complex forms which resolves the HJ.

The protein resides in the cytoplasm. The enzyme catalyses ATP + H2O = ADP + phosphate + H(+). The RuvA-RuvB-RuvC complex processes Holliday junction (HJ) DNA during genetic recombination and DNA repair, while the RuvA-RuvB complex plays an important role in the rescue of blocked DNA replication forks via replication fork reversal (RFR). RuvA specifically binds to HJ cruciform DNA, conferring on it an open structure. The RuvB hexamer acts as an ATP-dependent pump, pulling dsDNA into and through the RuvAB complex. RuvB forms 2 homohexamers on either side of HJ DNA bound by 1 or 2 RuvA tetramers; 4 subunits per hexamer contact DNA at a time. Coordinated motions by a converter formed by DNA-disengaged RuvB subunits stimulates ATP hydrolysis and nucleotide exchange. Immobilization of the converter enables RuvB to convert the ATP-contained energy into a lever motion, pulling 2 nucleotides of DNA out of the RuvA tetramer per ATP hydrolyzed, thus driving DNA branch migration. The RuvB motors rotate together with the DNA substrate, which together with the progressing nucleotide cycle form the mechanistic basis for DNA recombination by continuous HJ branch migration. Branch migration allows RuvC to scan DNA until it finds its consensus sequence, where it cleaves and resolves cruciform DNA. The protein is Holliday junction branch migration complex subunit RuvB of Vibrio campbellii (strain ATCC BAA-1116).